The chain runs to 322 residues: Acetyl-coenzyme A carboxylase carboxyl transferase subunit beta (322 aa).

The CoA carboxyltransferase N-terminal domain occupies 24–293 (LWIKCPDTGQ…PAVEEIAASD (270 aa)).

The protein belongs to the AccD/PCCB family. As to quaternary structure, acetyl-CoA carboxylase is a heterohexamer composed of biotin carboxyl carrier protein (AccB), biotin carboxylase (AccC) and two subunits each of ACCase subunit alpha (AccA) and ACCase subunit beta (AccD).

It localises to the cytoplasm. The catalysed reaction is N(6)-carboxybiotinyl-L-lysyl-[protein] + acetyl-CoA = N(6)-biotinyl-L-lysyl-[protein] + malonyl-CoA. It functions in the pathway lipid metabolism; malonyl-CoA biosynthesis; malonyl-CoA from acetyl-CoA: step 1/1. Component of the acetyl coenzyme A carboxylase (ACC) complex. Biotin carboxylase (BC) catalyzes the carboxylation of biotin on its carrier protein (BCCP) and then the CO(2) group is transferred by the transcarboxylase to acetyl-CoA to form malonyl-CoA. This chain is Acetyl-coenzyme A carboxylase carboxyl transferase subunit beta, found in Rhodopseudomonas palustris (strain BisB5).